The chain runs to 360 residues: Phospho-N-acetylmuramoyl-pentapeptide-transferase (360 aa).

The next 10 membrane-spanning stretches (helical) occupy residues 26–46 (AIVS…RLIA), 72–92 (PTMG…LWAY), 94–114 (SNPY…VGFV), 132–152 (WKYF…YITG), 168–188 (VMPQ…VGTG), 199–219 (GLAI…AWAT), 236–256 (AGEL…FLWF), 263–283 (VFMG…IAVL), 288–308 (FLLV…ILQV), and 338–358 (VIVR…ATLK).

This sequence belongs to the glycosyltransferase 4 family. MraY subfamily. Requires Mg(2+) as cofactor.

The protein resides in the cell inner membrane. It catalyses the reaction UDP-N-acetyl-alpha-D-muramoyl-L-alanyl-gamma-D-glutamyl-meso-2,6-diaminopimeloyl-D-alanyl-D-alanine + di-trans,octa-cis-undecaprenyl phosphate = di-trans,octa-cis-undecaprenyl diphospho-N-acetyl-alpha-D-muramoyl-L-alanyl-D-glutamyl-meso-2,6-diaminopimeloyl-D-alanyl-D-alanine + UMP. It functions in the pathway cell wall biogenesis; peptidoglycan biosynthesis. In terms of biological role, catalyzes the initial step of the lipid cycle reactions in the biosynthesis of the cell wall peptidoglycan: transfers peptidoglycan precursor phospho-MurNAc-pentapeptide from UDP-MurNAc-pentapeptide onto the lipid carrier undecaprenyl phosphate, yielding undecaprenyl-pyrophosphoryl-MurNAc-pentapeptide, known as lipid I. This is Phospho-N-acetylmuramoyl-pentapeptide-transferase from Cronobacter sakazakii (strain ATCC BAA-894) (Enterobacter sakazakii).